The following is a 129-amino-acid chain: Lysozyme C, milk isozyme (129 aa).

In terms of domain architecture, C-type lysozyme spans 1-129; it reads KVFSKCELAH…LSEYLASCNL (129 aa). Intrachain disulfides connect C6–C127, C30–C115, C65–C80, and C76–C94. Residues E35 and D53 contribute to the active site. 5 residues coordinate Ca(2+): K82, D85, N87, D90, and D91.

The protein belongs to the glycosyl hydrolase 22 family. In terms of assembly, monomer. Ca(2+) serves as cofactor.

It catalyses the reaction Hydrolysis of (1-&gt;4)-beta-linkages between N-acetylmuramic acid and N-acetyl-D-glucosamine residues in a peptidoglycan and between N-acetyl-D-glucosamine residues in chitodextrins.. Its function is as follows. Lysozymes have primarily a bacteriolytic function; those in tissues and body fluids are associated with the monocyte-macrophage system and enhance the activity of immunoagents. In Equus caballus (Horse), this protein is Lysozyme C, milk isozyme (LYZ).